Here is a 475-residue protein sequence, read N- to C-terminus: Histidine--tRNA ligase (475 aa).

It belongs to the class-II aminoacyl-tRNA synthetase family. In terms of assembly, homodimer.

Its subcellular location is the cytoplasm. The catalysed reaction is tRNA(His) + L-histidine + ATP = L-histidyl-tRNA(His) + AMP + diphosphate + H(+). This chain is Histidine--tRNA ligase, found in Flavobacterium johnsoniae (strain ATCC 17061 / DSM 2064 / JCM 8514 / BCRC 14874 / CCUG 350202 / NBRC 14942 / NCIMB 11054 / UW101) (Cytophaga johnsonae).